The primary structure comprises 20 residues: Large ribosomal subunit protein uL10 (20 aa).

The protein belongs to the universal ribosomal protein uL10 family. As to quaternary structure, part of the ribosomal stalk of the 50S ribosomal subunit. The N-terminus interacts with L11 and the large rRNA to form the base of the stalk. The C-terminus forms an elongated spine to which L12 dimers bind in a sequential fashion forming a multimeric L10(L12)X complex.

In terms of biological role, forms part of the ribosomal stalk, playing a central role in the interaction of the ribosome with GTP-bound translation factors. The sequence is that of Large ribosomal subunit protein uL10 (rplJ) from Citrobacter freundii.